We begin with the raw amino-acid sequence, 626 residues long: Chaperone protein DnaK (626 aa).

T197 is subject to Phosphothreonine; by autocatalysis. Over residues 598 to 612 (AQGEQGQAAQPQAET) the composition is skewed to low complexity. The disordered stretch occupies residues 598–626 (AQGEQGQAAQPQAETQGDDVQDVEFEEVK). Residues 613 to 626 (QGDDVQDVEFEEVK) are compositionally biased toward acidic residues.

Belongs to the heat shock protein 70 family.

In terms of biological role, acts as a chaperone. This Flavobacterium psychrophilum (strain ATCC 49511 / DSM 21280 / CIP 103535 / JIP02/86) protein is Chaperone protein DnaK.